The chain runs to 469 residues: Proline--tRNA ligase (469 aa).

The protein belongs to the class-II aminoacyl-tRNA synthetase family. ProS type 3 subfamily. Homodimer.

Its subcellular location is the cytoplasm. It carries out the reaction tRNA(Pro) + L-proline + ATP = L-prolyl-tRNA(Pro) + AMP + diphosphate. Its function is as follows. Catalyzes the attachment of proline to tRNA(Pro) in a two-step reaction: proline is first activated by ATP to form Pro-AMP and then transferred to the acceptor end of tRNA(Pro). This is Proline--tRNA ligase from Methanosphaera stadtmanae (strain ATCC 43021 / DSM 3091 / JCM 11832 / MCB-3).